Consider the following 217-residue polypeptide: 3,4-dihydroxy-2-butanone 4-phosphate synthase (217 aa).

Residues 37–38, D42, 150–154, and E174 each bind D-ribulose 5-phosphate; these read RE and RRGHT. Residue E38 participates in Mg(2+) binding. H153 lines the Mg(2+) pocket.

The protein belongs to the DHBP synthase family. In terms of assembly, homodimer. Requires Mg(2+) as cofactor. The cofactor is Mn(2+).

It carries out the reaction D-ribulose 5-phosphate = (2S)-2-hydroxy-3-oxobutyl phosphate + formate + H(+). It functions in the pathway cofactor biosynthesis; riboflavin biosynthesis; 2-hydroxy-3-oxobutyl phosphate from D-ribulose 5-phosphate: step 1/1. Catalyzes the conversion of D-ribulose 5-phosphate to formate and 3,4-dihydroxy-2-butanone 4-phosphate. This chain is 3,4-dihydroxy-2-butanone 4-phosphate synthase, found in Yersinia enterocolitica serotype O:8 / biotype 1B (strain NCTC 13174 / 8081).